The primary structure comprises 437 residues: 5-hydroxytryptamine receptor 3B (437 aa).

Residues 1 to 21 (MILLWSCLLVAVVGILGTATP) form the signal peptide. The Extracellular portion of the chain corresponds to 22 to 238 (QPGNSSLHRL…VVIRRCPLAY (217 aa)). Residues Asn25, Asn92, and Asn134 are each glycosylated (N-linked (GlcNAc...) asparagine). The cysteines at positions 151 and 165 are disulfide-linked. The helical transmembrane segment at 239–259 (VVSLLIPSIFLMLVDLGSFYL) threads the bilayer. The Cytoplasmic segment spans residues 260-264 (PPNCR). A helical membrane pass occupies residues 265–282 (ARIVFKTNVLVGYTVFRV). A glycan (N-linked (GlcNAc...) asparagine) is linked at Asn283. Topologically, residues 283–292 (NMSDEVPRSA) are extracellular. Residues 293–313 (GCTPLIGVFFTVCMALLVLSL) form a helical membrane-spanning segment. The Cytoplasmic portion of the chain corresponds to 314 to 410 (SKSILLIKFL…WLAILYRFDQ (97 aa)). The segment at 377–409 (FWFQFRSINNSLRTRDQIHQKEVEWLAILYRFD) is HA-stretch; determines single-channel conductance in 5-HT3 receptors. The helical transmembrane segment at 411 to 431 (LLFRIYLAVLGLYTVTLCSLW) threads the bilayer. Residues 432-437 (ALWSRM) lie on the Extracellular side of the membrane.

The protein belongs to the ligand-gated ion channel (TC 1.A.9) family. 5-hydroxytryptamine receptor (TC 1.A.9.2) subfamily. HTR3B sub-subfamily. As to quaternary structure, forms homopentameric as well as heteropentameric serotonin-activated cation-selective channel complexes with HTR3A. The homomeric complex is not functional. Heteropentameric complexes display properties which resemble that of neuronal serotonin-activated channels in vivo. In terms of processing, N-glycosylation is required for membrane localization.

It is found in the postsynaptic cell membrane. The protein resides in the cell membrane. The catalysed reaction is Na(+)(in) = Na(+)(out). The enzyme catalyses K(+)(in) = K(+)(out). It catalyses the reaction Ca(2+)(in) = Ca(2+)(out). In terms of biological role, forms serotonin (5-hydroxytryptamine/5-HT3)-activated cation-selective channel complexes, which when activated cause fast, depolarizing responses in neurons. This Mus musculus (Mouse) protein is 5-hydroxytryptamine receptor 3B.